We begin with the raw amino-acid sequence, 242 residues long: Biosynthetic peptidoglycan transglycosylase (242 aa).

A helical membrane pass occupies residues 19-39 (LLLACAVLWGGGVALFSIVPV).

Belongs to the glycosyltransferase 51 family.

It is found in the cell inner membrane. The catalysed reaction is [GlcNAc-(1-&gt;4)-Mur2Ac(oyl-L-Ala-gamma-D-Glu-L-Lys-D-Ala-D-Ala)](n)-di-trans,octa-cis-undecaprenyl diphosphate + beta-D-GlcNAc-(1-&gt;4)-Mur2Ac(oyl-L-Ala-gamma-D-Glu-L-Lys-D-Ala-D-Ala)-di-trans,octa-cis-undecaprenyl diphosphate = [GlcNAc-(1-&gt;4)-Mur2Ac(oyl-L-Ala-gamma-D-Glu-L-Lys-D-Ala-D-Ala)](n+1)-di-trans,octa-cis-undecaprenyl diphosphate + di-trans,octa-cis-undecaprenyl diphosphate + H(+). The protein operates within cell wall biogenesis; peptidoglycan biosynthesis. Its function is as follows. Peptidoglycan polymerase that catalyzes glycan chain elongation from lipid-linked precursors. This is Biosynthetic peptidoglycan transglycosylase from Klebsiella oxytoca.